A 459-amino-acid chain; its full sequence is NADH-ubiquinone oxidoreductase chain 4 (459 aa).

The next 12 helical transmembrane spans lie at 20-42 (PKWL…LTLF), 61-81 (MIST…IIAS), 103-123 (LQAL…YIMF), 148-168 (IYFL…LLYL), 194-214 (FLWV…GVHL), 224-244 (PVAG…YGMI), 257-277 (LAYP…SICM), 284-303 (SLIA…GILI), 307-329 (WGFT…LFCL), 350-370 (IILP…MALP), 392-414 (TILL…YMSS), and 435-455 (LLLT…ELIW).

It belongs to the complex I subunit 4 family.

The protein localises to the mitochondrion membrane. The catalysed reaction is a ubiquinone + NADH + 5 H(+)(in) = a ubiquinol + NAD(+) + 4 H(+)(out). Core subunit of the mitochondrial membrane respiratory chain NADH dehydrogenase (Complex I) that is believed to belong to the minimal assembly required for catalysis. Complex I functions in the transfer of electrons from NADH to the respiratory chain. The immediate electron acceptor for the enzyme is believed to be ubiquinone. The protein is NADH-ubiquinone oxidoreductase chain 4 (MT-ND4) of Polypterus ornatipinnis (Ornate bichir).